A 123-amino-acid polypeptide reads, in one-letter code: Small ribosomal subunit protein uS12 (123 aa).

Residue aspartate 89 is modified to 3-methylthioaspartic acid.

Belongs to the universal ribosomal protein uS12 family. Part of the 30S ribosomal subunit. Contacts proteins S8 and S17. May interact with IF1 in the 30S initiation complex.

Functionally, with S4 and S5 plays an important role in translational accuracy. Its function is as follows. Interacts with and stabilizes bases of the 16S rRNA that are involved in tRNA selection in the A site and with the mRNA backbone. Located at the interface of the 30S and 50S subunits, it traverses the body of the 30S subunit contacting proteins on the other side and probably holding the rRNA structure together. The combined cluster of proteins S8, S12 and S17 appears to hold together the shoulder and platform of the 30S subunit. This Orientia tsutsugamushi (strain Boryong) (Rickettsia tsutsugamushi) protein is Small ribosomal subunit protein uS12.